Consider the following 417-residue polypeptide: Tryptophan synthase beta chain (417 aa).

Residue lysine 110 is modified to N6-(pyridoxal phosphate)lysine.

It belongs to the TrpB family. In terms of assembly, tetramer of two alpha and two beta chains. Pyridoxal 5'-phosphate serves as cofactor.

The catalysed reaction is (1S,2R)-1-C-(indol-3-yl)glycerol 3-phosphate + L-serine = D-glyceraldehyde 3-phosphate + L-tryptophan + H2O. It participates in amino-acid biosynthesis; L-tryptophan biosynthesis; L-tryptophan from chorismate: step 5/5. The beta subunit is responsible for the synthesis of L-tryptophan from indole and L-serine. The protein is Tryptophan synthase beta chain of Prochlorococcus marinus (strain NATL1A).